Reading from the N-terminus, the 790-residue chain is F-box and leucine-rich repeat protein 13 (790 aa).

The F-box domain maps to 237 to 283; the sequence is AFDISVLPEQAILQIFLYLTFKDMMACSRVNRSWMAMIQRGSLWNSI. LRR repeat units follow at residues 503–525, 531–552, 557–579, 582–602, 606–628, and 632–657; these read QLTV…HFFD, RLRE…IRLS, NLHY…YIAS, SLIS…TILS, KLRE…AYCK, and LLEH…IFCT.

Belongs to the DRC6 family. Component of the nexin-dynein regulatory complex (N-DRC). Directly interacts with SKP1 and CUL1. Interacts with TCTE1/DRC5.

It localises to the cytoplasm. It is found in the cytoskeleton. Its subcellular location is the flagellum axoneme. The protein resides in the microtubule organizing center. The protein localises to the centrosome. Substrate-recognition component of the SCF (SKP1-CUL1-F-box protein)-type E3 ubiquitin ligase complex. Component of the nexin-dynein regulatory complex (N-DRC), a key regulator of ciliary/flagellar motility which maintains the alignment and integrity of the distal axoneme and regulates microtubule sliding in motile axonemes. Specifically targets CEP192 isoform 3 for ubiquitin-mediated proteolysis and thereby acts as a regulator of microtubule nucleation activity. The polypeptide is F-box and leucine-rich repeat protein 13 (Fbxl13) (Mus musculus (Mouse)).